A 251-amino-acid polypeptide reads, in one-letter code: MYRARAARAGPEPGSPGRFGILSTGQLRDLLQDEPKLDRIVRLSRKFQGLQLEREACLASNYALAKENLALRPRLEMGRAALAIKYQELREVAENCADKLQRLEESMHRWSPHCALGWLQAELEEAEQEAEEQMEQLLLGEQSLEAFLPAFQRGRALAHLRRTQAEKLQELLRRRERSAQPAPTSAADPPKSFPAAAVLPTGAARGPPAVPRSLPPLDSRPVPPLKGSPGCPLGPAPLLSPRPSQPEPPHR.

Residues 93–182 (AENCADKLQR…RRRERSAQPA (90 aa)) form the VPS37 C-terminal domain. The disordered stretch occupies residues 174-251 (RRERSAQPAP…RPSQPEPPHR (78 aa)). Positions 221 to 251 (PVPPLKGSPGCPLGPAPLLSPRPSQPEPPHR) are enriched in pro residues.

This sequence belongs to the VPS37 family. Component of the ESCRT-I complex (endosomal sorting complex required for transport I) which consists of TSG101, VPS28, a VPS37 protein (VPS37A to -D) and MVB12A or MVB12B in a 1:1:1:1 stoichiometry. Interacts with TSG101 and MVB12A. Component of the ESCRT-I complex (endosomal sorting complex required for transport I) which consists of TSG101, VPS28, a VPS37 protein (VPS37A to -D) and UBAP1 in a 1:1:1:1 stoichiometry.

It localises to the late endosome membrane. Functionally, component of the ESCRT-I complex, a regulator of vesicular trafficking process. Required for the sorting of endocytic ubiquitinated cargos into multivesicular bodies. May be involved in cell growth and differentiation. In Homo sapiens (Human), this protein is Vacuolar protein sorting-associated protein 37D.